The following is a 215-amino-acid chain: 3-dehydroquinate dehydratase (215 aa).

Residues 30–32 (EVR) and R62 contribute to the 3-dehydroquinate site. H114 serves as the catalytic Proton donor/acceptor. Residue K140 is the Schiff-base intermediate with substrate of the active site. 3-dehydroquinate is bound by residues R178 and Q201.

Belongs to the type-I 3-dehydroquinase family. Homodimer.

It catalyses the reaction 3-dehydroquinate = 3-dehydroshikimate + H2O. The protein operates within metabolic intermediate biosynthesis; chorismate biosynthesis; chorismate from D-erythrose 4-phosphate and phosphoenolpyruvate: step 3/7. In terms of biological role, involved in the third step of the chorismate pathway, which leads to the biosynthesis of aromatic amino acids. Catalyzes the cis-dehydration of 3-dehydroquinate (DHQ) and introduces the first double bond of the aromatic ring to yield 3-dehydroshikimate. The protein is 3-dehydroquinate dehydratase of Methanopyrus kandleri (strain AV19 / DSM 6324 / JCM 9639 / NBRC 100938).